A 567-amino-acid chain; its full sequence is Geranylgeranyl transferase type-2 subunit alpha (567 aa).

6 PFTA repeats span residues Leu44–Thr78, Leu88–Glu122, Asn124–Val158, Ala159–Pro193, Val207–Pro241, and Val363–Pro397. Ser98 carries the phosphoserine modification. LRR repeat units lie at residues Asp442–Leu463, Leu464–Arg486, Cys487–Pro508, Arg509–Ala530, and Arg534–Leu555.

Belongs to the protein prenyltransferase subunit alpha family. Heterotrimer composed of RABGGTA, RABGGTB and CHM; within this trimer, RABGGTA and RABGGTB form the catalytic component B, while CHM (component A) mediates peptide substrate binding. The Rab GGTase dimer (RGGT) interacts with CHM (component A) prior to Rab protein binding; the association is stabilized by geranylgeranyl pyrophosphate (GGpp). The CHM:RGGT:Rab complex is destabilized by GGpp. Interacts with non-phosphorylated form of RAB8A; phosphorylation of RAB8A at 'Thr-72' disrupts this interaction.

The catalysed reaction is geranylgeranyl diphosphate + L-cysteinyl-[protein] = S-geranylgeranyl-L-cysteinyl-[protein] + diphosphate. Its activity is regulated as follows. The enzymatic reaction requires the aid of a Rab escort protein (also called component A), such as CHM. In terms of biological role, catalyzes the transfer of a geranylgeranyl moiety from geranylgeranyl diphosphate to both cysteines of Rab proteins with the C-terminal sequence -XXCC, -XCXC and -CCXX, such as RAB1A, RAB3A, RAB5A and RAB7A. In Mus musculus (Mouse), this protein is Geranylgeranyl transferase type-2 subunit alpha (Rabggta).